We begin with the raw amino-acid sequence, 634 residues long: Biosynthetic arginine decarboxylase (634 aa).

An N6-(pyridoxal phosphate)lysine modification is found at lysine 103. A substrate-binding site is contributed by 283–293 (FDVGGGLGVDY).

The protein belongs to the Orn/Lys/Arg decarboxylase class-II family. SpeA subfamily. The cofactor is Mg(2+). Requires pyridoxal 5'-phosphate as cofactor.

The catalysed reaction is L-arginine + H(+) = agmatine + CO2. Its pathway is amine and polyamine biosynthesis; agmatine biosynthesis; agmatine from L-arginine: step 1/1. Catalyzes the biosynthesis of agmatine from arginine. This chain is Biosynthetic arginine decarboxylase, found in Photorhabdus laumondii subsp. laumondii (strain DSM 15139 / CIP 105565 / TT01) (Photorhabdus luminescens subsp. laumondii).